The primary structure comprises 894 residues: Exocyst complex component 1 (894 aa).

Coiled coils occupy residues 152-199 (GDEE…LQVL) and 205-259 (QSIM…NHLI). The disordered stretch occupies residues 437-495 (SKESKKFATLPRKESAVKQETESLHGSSGKLTGSTSSLNKLSVQSSGSRRSQSSSLLDM). Positions 438-459 (KESKKFATLPRKESAVKQETES) are enriched in basic and acidic residues. The segment covering 460-491 (LHGSSGKLTGSTSSLNKLSVQSSGSRRSQSSS) has biased composition (low complexity). Ser470 carries the phosphoserine modification. Phosphothreonine is present on Thr471. 3 positions are modified to phosphoserine: Ser473, Ser487, and Ser501.

It belongs to the SEC3 family. In terms of assembly, the exocyst complex is composed of EXOC1, EXOC2, EXOC3, EXOC4, EXOC5, EXOC6, EXOC7 and EXOC8. Interacts with EEF1A1. Interacts with SLC6A9; interaction increases the transporter capacity of SLC6A9 probably by promoting its insertion into the cell membrane.

The protein resides in the midbody. Its subcellular location is the midbody ring. The protein localises to the cytoplasm. It localises to the perinuclear region. It is found in the cell membrane. In terms of biological role, component of the exocyst complex involved in the docking of exocytic vesicles with fusion sites on the plasma membrane. This is Exocyst complex component 1 (Exoc1) from Mus musculus (Mouse).